A 179-amino-acid polypeptide reads, in one-letter code: Large ribosomal subunit protein uL5 (179 aa).

This sequence belongs to the universal ribosomal protein uL5 family. Part of the 50S ribosomal subunit; part of the 5S rRNA/L5/L18/L25 subcomplex. Contacts the 5S rRNA and the P site tRNA. Forms a bridge to the 30S subunit in the 70S ribosome.

In terms of biological role, this is one of the proteins that bind and probably mediate the attachment of the 5S RNA into the large ribosomal subunit, where it forms part of the central protuberance. In the 70S ribosome it contacts protein S13 of the 30S subunit (bridge B1b), connecting the 2 subunits; this bridge is implicated in subunit movement. Contacts the P site tRNA; the 5S rRNA and some of its associated proteins might help stabilize positioning of ribosome-bound tRNAs. In Rickettsia prowazekii (strain Madrid E), this protein is Large ribosomal subunit protein uL5.